Reading from the N-terminus, the 286-residue chain is Putative sugar uptake protein lmo0176 (286 aa).

Transmembrane regions (helical) follow at residues 4–26 (MIAL…FGGS), 33–55 (GMTL…VYTL), 114–136 (LRII…TSYA), 149–167 (GLIT…VVLI), 177–194 (AILP…IMTH), 207–226 (LLLT…MVHA), 230–252 (VGVA…GGII), and 264–283 (LFVI…IGVA).

It belongs to the GRP transporter (TC 2.A.7.5) family.

The protein resides in the cell membrane. In Listeria monocytogenes serovar 1/2a (strain ATCC BAA-679 / EGD-e), this protein is Putative sugar uptake protein lmo0176.